A 418-amino-acid polypeptide reads, in one-letter code: E3 ubiquitin-protein ligase pellino homolog 1 (418 aa).

Residues 13 to 200 enclose the FHA; atypical domain; it reads APVKYGELIV…MHPRNGFTED (188 aa). Position 121 is a phosphoserine (Ser121). The residue at position 127 (Thr127) is a Phosphothreonine. The ring-like domain; necessary for ubiquitination of RIPK3 stretch occupies residues 311–399; the sequence is CGHVHGYHNW…TFHAACPFCA (89 aa).

This sequence belongs to the pellino family. Interacts with MAP3K7. Upon IL1B treatment, forms a complex with TRAF6, IRAK1, IRAK4 and MYD88; this complex recruits MAP3K7/TAK1, TAB1 and TAB2 to mediate NF-kappa-B activation. Direct binding of SMAD6 to PELI1 prevents the complex formation and hence negatively regulates IL1R-TLR signaling and eventually NF-kappa-B-mediated gene expression. Interacts (via atypical FHA domain) with RIPK3. Binds preferentially to the 'Thr-182' phosphorylated form of RIPK3. Interacts with RIPK1. In terms of processing, phosphorylation by IRAK1 and IRAK4 enhances its E3 ligase activity. Phosphorylated by ATM in response to DNA damage, promoting localization to DNA double-strand breaks (DSBs) and ability to mediate 'Lys-63'-linked ubiquitination of NBN. Post-translationally, sumoylated.

It is found in the chromosome. The catalysed reaction is S-ubiquitinyl-[E2 ubiquitin-conjugating enzyme]-L-cysteine + [acceptor protein]-L-lysine = [E2 ubiquitin-conjugating enzyme]-L-cysteine + N(6)-ubiquitinyl-[acceptor protein]-L-lysine.. Its pathway is protein modification; protein ubiquitination. Functionally, E3 ubiquitin ligase catalyzing the covalent attachment of ubiquitin moieties onto substrate proteins. Involved in the TLR and IL-1 signaling pathways via interaction with the complex containing IRAK kinases and TRAF6. Acts as a positive regulator of inflammatory response in microglia through activation of NF-kappa-B and MAP kinase. Mediates 'Lys-63'-linked polyubiquitination of IRAK1 allowing subsequent NF-kappa-B activation. Conjugates 'Lys-63'-linked ubiquitin chains to the adapter protein ASC/PYCARD, which in turn is crucial for NLRP3 inflammasome activation. Mediates 'Lys-48'-linked polyubiquitination of RIPK3 leading to its subsequent proteasome-dependent degradation; preferentially recognizes and mediates the degradation of the 'Thr-182' phosphorylated form of RIPK3. Negatively regulates necroptosis by reducing RIPK3 expression. Mediates 'Lys-63'-linked ubiquitination of RIPK1. Following phosphorylation by ATM, catalyzes 'Lys-63'-linked ubiquitination of NBN, promoting DNA repair via homologous recombination. Negatively regulates activation of the metabolic mTORC1 signaling pathway by mediating 'Lys-63'-linked ubiquitination of mTORC1-inhibitory protein TSC1 and thereby promoting TSC1/TSC2 complex stability. The sequence is that of E3 ubiquitin-protein ligase pellino homolog 1 (Peli1) from Mus musculus (Mouse).